Here is a 1141-residue protein sequence, read N- to C-terminus: Putative late blight resistance protein homolog R1B-13 (1141 aa).

Residues 417-437 are a coiled coil; the sequence is DSLAFLKNQIQVIQMEFEILQ. In terms of domain architecture, NB-ARC spans 516-742; sequence TVITHTSSQL…LSIVLVADVL (227 aa). LRR repeat units lie at residues 826-851, 869-894, 992-1016, 1017-1041, and 1043-1068; these read FKFLKVLDLEHQVVIDFIPTELPYLR, LWNLETLILKGTSAKTLLLPSTVWDM, APNLKYLKLSGYYLDSQYLSETVDH, LKHLEVLKLYNVEFGDYREWEVSNG, and FPQLKILKLENLSLMKWIVADDAFPI.

This sequence belongs to the disease resistance NB-LRR family.

Its subcellular location is the cytoplasm. It localises to the membrane. Its function is as follows. Confers resistance to late blight (Phytophthora infestans) races carrying the avirulence gene Avr1. Resistance proteins guard the plant against pathogens that contain an appropriate avirulence protein via an indirect interaction with this avirulence protein. That triggers a defense system including the hypersensitive response, which restricts the pathogen growth. This chain is Putative late blight resistance protein homolog R1B-13 (R1B-13), found in Solanum demissum (Wild potato).